The chain runs to 292 residues: 5,10-methylenetetrahydrofolate reductase (292 aa).

Catalysis depends on Glu-28, which acts as the Proton donor/acceptor. Thr-59 contributes to the NADH binding site. FAD is bound by residues Tyr-60, Ala-62, His-88, Arg-118, Gly-119, Asp-120, Ala-132, Tyr-152, His-156, Asp-165, Asn-168, Lys-171, and Lys-172. (6S)-5-methyl-5,6,7,8-tetrahydrofolate is bound at residue Asp-120. NADH is bound at residue Gln-183. Gln-183 lines the (6S)-5-methyl-5,6,7,8-tetrahydrofolate pocket.

It belongs to the methylenetetrahydrofolate reductase family. It depends on FAD as a cofactor.

It catalyses the reaction (6S)-5-methyl-5,6,7,8-tetrahydrofolate + NAD(+) = (6R)-5,10-methylene-5,6,7,8-tetrahydrofolate + NADH + H(+). The protein operates within one-carbon metabolism; tetrahydrofolate interconversion. Its pathway is amino-acid biosynthesis; L-methionine biosynthesis via de novo pathway. Its function is as follows. Catalyzes the NADH-dependent reduction of 5,10-methylenetetrahydrofolate to 5-methyltetrahydrofolate. Is required to provide the methyl group necessary for methionine synthetase to convert homocysteine to methionine; the methyl group is given by 5-methyltetrahydrofolate. The chain is 5,10-methylenetetrahydrofolate reductase (metF) from Buchnera aphidicola subsp. Acyrthosiphon pisum (strain APS) (Acyrthosiphon pisum symbiotic bacterium).